The primary structure comprises 557 residues: Inositol-3-phosphate synthase 1 (557 aa).

21 residues coordinate NAD(+): Gly-67, Gly-68, Asn-69, Asn-70, Asp-141, Ser-177, Val-178, Gln-188, Arg-191, Thr-228, Ala-229, Asn-230, Thr-231, Gly-278, Ser-279, Asp-303, Ser-306, Asn-337, Asn-338, Asp-339, and Lys-352. Ser-279 is subject to Phosphoserine. At Ser-357 the chain carries Phosphoserine. NAD(+) is bound by residues Gly-390, Asp-391, Asp-419, and Ser-420. Residues 514–557 (GIKPEEVKATSPLPCKKESTPATNGCTGDANGHTQAPTPELSTA) are disordered. Position 524 is a phosphoserine (Ser-524). A compositionally biased stretch (polar residues) spans 533–557 (TPATNGCTGDANGHTQAPTPELSTA).

The protein belongs to the myo-inositol 1-phosphate synthase family. As to quaternary structure, homotrimer. NAD(+) serves as cofactor. Post-translationally, phosphorylation at Ser-524 does not appear to affect enzyme activity, and is detected in brain and testis. As to expression, expressed in testis, brain and epididymis (at protein level). Moderately expressed in brain, lung, liver, and kidney. Low expression in heart and spleen. Very low expression in skeletal muscle. Expressed in testis, spleen, heart, brainstem, hippocampus, cerebellum, cortex and amygdala. Absent or very lowly expressed in intestine, lung and muscle. In terms of tissue distribution, expressed in intestine, lung, liver, muscle, testis, spleen, brainstem, hippocampus, cerebellum, cortex and amygdala. Absent or lowly expressed in heart and kidney. As to expression, expressed in intestine (at protein level).

It localises to the cytoplasm. The catalysed reaction is D-glucose 6-phosphate = 1D-myo-inositol 3-phosphate. Its pathway is polyol metabolism; myo-inositol biosynthesis; myo-inositol from D-glucose 6-phosphate: step 1/2. With respect to regulation, inhibited by 2-deoxyglucitol 6-phosphate (dgtolP) and 2-deoxy-D-glucose 6-phosphate. Inhibited by copper, mercury, cadmium, zinc and copper ions. Activated by potassium and ammonium ions. Its function is as follows. Key enzyme in myo-inositol biosynthesis pathway that catalyzes the conversion of glucose 6-phosphate to 1-myo-inositol 1-phosphate in a NAD-dependent manner. Rate-limiting enzyme in the synthesis of all inositol-containing compounds. Key enzyme in myo-inositol biosynthesis pathway that catalyzes the conversion of glucose 6-phosphate to 1-myo-inositol 1-phosphate in a NAD-dependent manner. In terms of biological role, competitively inhibits the function of isoform 1, presumably by competing for NAD cofactor. The protein is Inositol-3-phosphate synthase 1 (Isyna1) of Rattus norvegicus (Rat).